The chain runs to 667 residues: UvrABC system protein B (667 aa).

One can recognise a Helicase ATP-binding domain in the interval 31 to 414 (AGIESGEKEQ…EMDRTKHVVQ (384 aa)). An ATP-binding site is contributed by 44–51 (GATGTGKT). The Beta-hairpin signature appears at 97-120 (YYDYYQPEAYVPSSDTYIEKDSAI). The Helicase C-terminal domain occupies 435 to 597 (QIDDLVGEIN…ITPHTIKKAI (163 aa)). The 36-residue stretch at 630–665 (LDMISKLEEQMKTAAKKLDFEQAATLRDTVMELKAQ) folds into the UVR domain.

Belongs to the UvrB family. In terms of assembly, forms a heterotetramer with UvrA during the search for lesions. Interacts with UvrC in an incision complex.

It is found in the cytoplasm. The UvrABC repair system catalyzes the recognition and processing of DNA lesions. A damage recognition complex composed of 2 UvrA and 2 UvrB subunits scans DNA for abnormalities. Upon binding of the UvrA(2)B(2) complex to a putative damaged site, the DNA wraps around one UvrB monomer. DNA wrap is dependent on ATP binding by UvrB and probably causes local melting of the DNA helix, facilitating insertion of UvrB beta-hairpin between the DNA strands. Then UvrB probes one DNA strand for the presence of a lesion. If a lesion is found the UvrA subunits dissociate and the UvrB-DNA preincision complex is formed. This complex is subsequently bound by UvrC and the second UvrB is released. If no lesion is found, the DNA wraps around the other UvrB subunit that will check the other stand for damage. This Lactiplantibacillus plantarum (strain ATCC BAA-793 / NCIMB 8826 / WCFS1) (Lactobacillus plantarum) protein is UvrABC system protein B.